We begin with the raw amino-acid sequence, 421 residues long: F-box only protein 5 (421 aa).

The residue at position 85 (S85) is a Phosphoserine. The interval 114 to 219 (ELEASRLYED…IGKKMGLEHL (106 aa)) is interaction with EVI5. In terms of domain architecture, F-box spans 223–273 (AELSRRGFVHLLANILTKLSGMDLVNLSKVSRIWKKILENNKGAFQLYSKT). Positions 236–313 (NILTKLSGMD…KSSTWAPPKK (78 aa)) are sufficient for interaction with RPS6KA2; Prevents association of CDC20 with RPS6KA2. The tract at residues 236 to 383 (NILTKLSGMD…SCQFEYCTKC (148 aa)) is requires for efficient binding to CDC20. The inhibits APC ubiquitin ligase activity stretch occupies residues 280–421 (SSKLSLHATT…KKSKKNLQRL (142 aa)). The interval 296-299 (RAAL) is competitively blocks access of APC substrates to the D-box coreceptor formed by FZR1 and ANAPC10. A ZBR-type zinc finger spans residues 348-396 (SLKACVRCNFPAKYDHYLERAVCKRESCQFEYCTKCLCAYHNNKDCLNG). Zn(2+) is bound by residues C352, C355, C370, C375, C380, C383, H388, and C393. The segment at 352 to 394 (CVRCNFPAKYDHYLERAVCKRESCQFEYCTKCLCAYHNNKDCL) is allows a rapid multiple mono-ubiquitination of the APC substrate, but strongly inhibits the slow ubiquitin chain elongation catalyzed by UBCH10. The sufficient to suppress UBE2S activity; essential for interaction with UBE2S; competitively inhibits the rapide ubiquitin chain elongation by UBE2D1 which blocks UBE2D1 with APC; indispensable for recruitment and position of FBXO5 to the catalytic site of APC; abrogates the inhibition of ubiquitin chain assembly primarily catalyzed by UBE2S; inhibits the ubiquitination by either UBE2C or UBE2D1 stretch occupies residues 411–421 (TKKSKKNLQRL).

Part of a SCF (SKP1-cullin-F-box) protein ligase complex. Interacts with BTRC; mediates proteolysis by the SCF ubiquitin ligase complex leading to activation of APC in late mitosis and subsequent mitotic progression. Interacts with FZR1/CDH1 and the N-terminal substrate-binding domain of CDC20; prevents APC activation. Also interacts with EVI5 which blocks its phosphorylation by PLK1 and prevents its subsequent binding to BTRC and degradation. Interacts simultaneously with anaphase promoting complex (APC), through at least ANAPC2, CDC23, CDC27, the APC substrate GMNN and the APC activator FZR1. Interacts with UBE2S; interferes with the activity of UBE2S mainly by disrupting the dynamic electrostatic association between the C-terminal tail of UBE2S and ANAPC2. Interacts with RPS6KA2; cooperates to induce the metaphase arrest of early blastomeres; increases and stabilizes interaction of FBXO5 with CDC20. Phosphorylation by CDK2 and subsequently by PLK1 triggers degradation during early mitosis through ubiquitin-mediated proteolysis by the SCF ubiquitin ligase complex containing the F-box protein BTRC. This degradation is necessary for the activation of APC in late mitosis and subsequent mitotic progression. Phosphorylated by RPS6KA2; increases and stabilizes interaction with CDC20. Post-translationally, ubiquitinated by the SCF(BTRC) complex following phosphorylation by PLK1. Undergoes both 'Lys-11' and 'Lys-48'-linked polyubiquitination by APC-FZR1 complex leading to degradation during G1 phase by the proteasome. Degraded through the SCF(BTRC) complex; degradation occurs during oocyte maturation, between germinal vesicle breakdown (GVBD) and meiosis I, and is required for the meiosis I-meiosis II transition. Expressed in oocytes and granulosa cells. Expressed in proliferating cells compartments in hair follicle and skin epidermis, spermatogonia, and intestinal crypts.

It is found in the nucleus. Its subcellular location is the cytoplasm. The protein localises to the cytoskeleton. It localises to the spindle. The protein operates within protein modification; protein ubiquitination. In terms of biological role, regulator of APC activity during mitotic and meiotic cell cycle. During mitotic cell cycle plays a role as both substrate and inhibitor of APC-FZR1 complex. During G1 phase, plays a role as substrate of APC-FZR1 complex E3 ligase. Then switches as an inhibitor of APC-FZR1 complex during S and G2 leading to cell-cycle commitment. As APC inhibitor, prevents the degradation of APC substrates at multiple levels: by interacting with APC and blocking access of APC substrates to the D-box co-receptor, formed by FZR1 and ANAPC10; by suppressing ubiquitin ligation and chain elongation by APC by preventing the UBE2C and UBE2S activities. Plays a role in genome integrity preservation by coordinating DNA replication with mitosis through APC inhibition in interphase to stabilize CCNA2 and GMNN in order to promote mitosis and prevent rereplication and DNA damage-induced cellular senescence. During oocyte maturation, plays a role in meiosis through inactivation of APC-FZR1 complex. Inhibits APC through RPS6KA2 interaction that increases FBXO5 affiniy for CDC20 leading to the metaphase arrest of the second meiotic division before fertilization. Controls entry into the first meiotic division through inactivation of APC-FZR1 complex. Promotes migration and osteogenic differentiation of mesenchymal stem cells. The sequence is that of F-box only protein 5 from Mus musculus (Mouse).